The following is a 403-amino-acid chain: Phosphopentomutase (403 aa).

Residues aspartate 13, aspartate 298, histidine 303, aspartate 339, histidine 340, and histidine 351 each contribute to the Mn(2+) site.

This sequence belongs to the phosphopentomutase family. Mn(2+) serves as cofactor.

The protein resides in the cytoplasm. It carries out the reaction 2-deoxy-alpha-D-ribose 1-phosphate = 2-deoxy-D-ribose 5-phosphate. The enzyme catalyses alpha-D-ribose 1-phosphate = D-ribose 5-phosphate. It functions in the pathway carbohydrate degradation; 2-deoxy-D-ribose 1-phosphate degradation; D-glyceraldehyde 3-phosphate and acetaldehyde from 2-deoxy-alpha-D-ribose 1-phosphate: step 1/2. In terms of biological role, isomerase that catalyzes the conversion of deoxy-ribose 1-phosphate (dRib-1-P) and ribose 1-phosphate (Rib-1-P) to deoxy-ribose 5-phosphate (dRib-5-P) and ribose 5-phosphate (Rib-5-P), respectively. This is Phosphopentomutase from Streptococcus pneumoniae serotype 19F (strain G54).